A 35-amino-acid chain; its full sequence is Cupiennin-1b (35 aa).

At E35 the chain carries Glutamic acid 1-amide.

The protein belongs to the cationic peptide 04 (cupiennin) family. 01 subfamily. In terms of tissue distribution, expressed by the venom gland.

The protein localises to the secreted. Has antimicrobial activity against E.coli, E.faecalis, P.aeruginosa, and S.aureus. Has insecticidal and hemolytic activities. Probably acts by disturbing membrane function with its amphipathic structure. The protein is Cupiennin-1b of Cupiennius salei (American wandering spider).